We begin with the raw amino-acid sequence, 252 residues long: Protein IL-40 (252 aa).

The signal sequence occupies residues 1–18; the sequence is MALLQLLLFAMLAACGFS. 2 N-linked (GlcNAc...) asparagine glycosylation sites follow: Asn-82 and Asn-177.

Expressed in bone marrow, spleen and lymph node.

Its subcellular location is the secreted. Probable B cell-associated cytokine that plays a role in the regulation of humoral immune responses. Involved in lymphocyte B cell development and immunoglobulin/IgA production. In Mus musculus (Mouse), this protein is Protein IL-40.